The primary structure comprises 474 residues: tRNA-2-methylthio-N(6)-dimethylallyladenosine synthase (474 aa).

The 118-residue stretch at 3–120 folds into the MTTase N-terminal domain; that stretch reads KKLHIKTWGC…LPEMIEQIQR (118 aa). Residues Cys-12, Cys-49, Cys-83, Cys-157, Cys-161, and Cys-164 each contribute to the [4Fe-4S] cluster site. Residues 143 to 375 enclose the Radical SAM core domain; the sequence is RADGPTAFVS…QDRITQQAMR (233 aa). One can recognise a TRAM domain in the interval 378-441; sequence RQMLGTVQRI…TNSLRGEFVR (64 aa).

This sequence belongs to the methylthiotransferase family. MiaB subfamily. As to quaternary structure, monomer. [4Fe-4S] cluster is required as a cofactor.

The protein resides in the cytoplasm. It carries out the reaction N(6)-dimethylallyladenosine(37) in tRNA + (sulfur carrier)-SH + AH2 + 2 S-adenosyl-L-methionine = 2-methylsulfanyl-N(6)-dimethylallyladenosine(37) in tRNA + (sulfur carrier)-H + 5'-deoxyadenosine + L-methionine + A + S-adenosyl-L-homocysteine + 2 H(+). Functionally, catalyzes the methylthiolation of N6-(dimethylallyl)adenosine (i(6)A), leading to the formation of 2-methylthio-N6-(dimethylallyl)adenosine (ms(2)i(6)A) at position 37 in tRNAs that read codons beginning with uridine. The protein is tRNA-2-methylthio-N(6)-dimethylallyladenosine synthase of Shewanella frigidimarina (strain NCIMB 400).